A 166-amino-acid chain; its full sequence is Protein phosphatase 1 regulatory subunit 1A (166 aa).

Residue M1 is modified to N-acetylmethionine. Residues M1–V166 form a disordered region. The interval K9–F12 is essential for activity. Residues P19–I29 show a composition bias toward basic and acidic residues. T35 bears the Phosphothreonine; by PKA mark. An essential for activity region spans residues T42–R54. A phosphoserine mark is found at S43, S46, S47, and S67. Low complexity predominate over residues A104–Q114. Over residues A143–S152 the composition is skewed to basic and acidic residues. The segment at A143–V166 is interaction with PPP1R15A. The span at T153–V166 shows a compositional bias: polar residues.

It belongs to the protein phosphatase inhibitor 1 family. Interacts with PPP1R15A. Post-translationally, phosphorylation of Thr-35 is required for activity.

In terms of biological role, inhibitor of protein-phosphatase 1. This protein may be important in hormonal control of glycogen metabolism. Hormones that elevate intracellular cAMP increase I-1 activity in many tissues. I-1 activation may impose cAMP control over proteins that are not directly phosphorylated by PKA. Following a rise in intracellular calcium, I-1 is inactivated by calcineurin (or PP2B). Does not inhibit type-2 phosphatases. This Oryctolagus cuniculus (Rabbit) protein is Protein phosphatase 1 regulatory subunit 1A (PPP1R1A).